The primary structure comprises 286 residues: NAD kinase (286 aa).

D74 serves as the catalytic Proton acceptor. NAD(+) is bound by residues 74 to 75 (DG), 148 to 149 (ND), D178, A186, 189 to 194 (TAYNLS), and Q244.

Belongs to the NAD kinase family. It depends on a divalent metal cation as a cofactor.

The protein localises to the cytoplasm. The catalysed reaction is NAD(+) + ATP = ADP + NADP(+) + H(+). In terms of biological role, involved in the regulation of the intracellular balance of NAD and NADP, and is a key enzyme in the biosynthesis of NADP. Catalyzes specifically the phosphorylation on 2'-hydroxyl of the adenosine moiety of NAD to yield NADP. This is NAD kinase from Campylobacter jejuni subsp. jejuni serotype O:2 (strain ATCC 700819 / NCTC 11168).